Here is a 555-residue protein sequence, read N- to C-terminus: MAIEGGERTCGVHELICIRKVSPEAVGFLSAVGVFIVLMLLLFLYINKKFCFENVGGFPDLGSGYNTRTNSQDKMYNSYMDRDEPGSSSESEDEALGKYHEALSRTHNSRWPLVDSRQKSYAWETRQKYSPLSAEYDGYSTEASMEDGNCIQRMRRTPPLDELQPPPYQDDSGSPHLSCTPSEIGDAKCEISHCSNSPRCSFNKCPSEGSTGHEAESYHNKGYEDDVPSDSTAVLSPEDMSAQGSSSQLPKPFDPEPEAKYGTLDVTFDYDSERQKLLVTVTAVTDIPTYNRTGGNSWQVHLVLLPIKKQRAKTSIQRGPCPVFTETFKFNHVESEMIGNYAVRFRLYGVHRMKKEKIVGEKIFYLTKLNLQGKMSLPVILEPSYNPSGCDSQVSLSEASCGDSTSSCQSLQHGSVPEILIGLLYNATTGRLSAEVIKGSHFKNLAANRPPNTYVKLTLLNSMGQEMSKCKTSTRRGQPNPVYKETFVFQVALFQLSDVTLILSVYNRRSMKRKEMIGWISLGLNSSGEEELRHWTAMKESKGQQVCRWHALLES.

The Extracellular segment spans residues 1-24 (MAIEGGERTCGVHELICIRKVSPE). The helical; Signal-anchor for type III membrane protein transmembrane segment at 25–47 (AVGFLSAVGVFIVLMLLLFLYIN) threads the bilayer. Over 48–555 (KKFCFENVGG…VCRWHALLES (508 aa)) the chain is Cytoplasmic. 3 disordered regions span residues 76-97 (YNSYMDRDEPGSSSESEDEALG), 157-179 (TPPLDELQPPPYQDDSGSPHLSC), and 205-258 (CPSE…PEPE). The span at 211–224 (TGHEAESYHNKGYE) shows a compositional bias: basic and acidic residues. 2 C2 domains span residues 260 to 379 (KYGT…SLPV) and 415 to 550 (SVPE…CRWH).

It belongs to the synaptotagmin family. As to quaternary structure, homodimer. Can also form heterodimers. In terms of tissue distribution, expressed in heart and testis. Expressed in brain (especially in the cerebellum).

Its subcellular location is the membrane. In terms of biological role, may be involved in the trafficking and exocytosis of secretory vesicles in non-neuronal tissues. Is Ca(2+)-independent. This Mus musculus (Mouse) protein is Synaptotagmin-14 (Syt14).